The sequence spans 62 residues: Large ribosomal subunit protein uL30 (62 aa).

This sequence belongs to the universal ribosomal protein uL30 family. As to quaternary structure, part of the 50S ribosomal subunit.

This chain is Large ribosomal subunit protein uL30, found in Gluconobacter oxydans (strain 621H) (Gluconobacter suboxydans).